Reading from the N-terminus, the 315-residue chain is ATP synthase gamma chain (315 aa).

It belongs to the ATPase gamma chain family. In terms of assembly, F-type ATPases have 2 components, CF(1) - the catalytic core - and CF(0) - the membrane proton channel. CF(1) has five subunits: alpha(3), beta(3), gamma(1), delta(1), epsilon(1). CF(0) has three main subunits: a, b and c.

The protein resides in the cellular thylakoid membrane. In terms of biological role, produces ATP from ADP in the presence of a proton gradient across the membrane. The gamma chain is believed to be important in regulating ATPase activity and the flow of protons through the CF(0) complex. This chain is ATP synthase gamma chain, found in Microcystis aeruginosa (strain NIES-843 / IAM M-2473).